The chain runs to 574 residues: Acetolactate synthase large subunit (574 aa).

Glutamate 51 serves as a coordination point for thiamine diphosphate. FAD is bound by residues arginine 153, 261-282, and 304-323; these read HGTY…IGVR and DIDP…IVGN. The segment at 397-477 is thiamine pyrophosphate binding; it reads QHQMFAALYY…ILILNLNNKS (81 aa). Residues aspartate 448 and asparagine 475 each coordinate Mg(2+).

It belongs to the TPP enzyme family. Dimer of large and small chains. The cofactor is Mg(2+). Thiamine diphosphate is required as a cofactor.

The catalysed reaction is 2 pyruvate + H(+) = (2S)-2-acetolactate + CO2. The protein operates within amino-acid biosynthesis; L-isoleucine biosynthesis; L-isoleucine from 2-oxobutanoate: step 1/4. Its pathway is amino-acid biosynthesis; L-valine biosynthesis; L-valine from pyruvate: step 1/4. The chain is Acetolactate synthase large subunit (ilvI) from Buchnera aphidicola subsp. Schlechtendalia chinensis.